Reading from the N-terminus, the 299-residue chain is F-actin-capping protein subunit alpha-3 (299 aa).

A phosphoserine mark is found at serine 2 and serine 290.

Belongs to the F-actin-capping protein alpha subunit family. As to quaternary structure, component of the F-actin capping complex, composed of a heterodimer of an alpha and a beta subunit. Component of the WASH complex, composed of F-actin-capping protein subunit alpha (CAPZA1, CAPZA2 or CAPZA3), F-actin-capping protein subunit beta (CAPZB), WASHC1, WASHC2, WASHC3, WASHC4 and WASHC5. As to expression, exclusively expressed in the testis.

The protein localises to the cytoplasm. It is found in the cytoskeleton. Its function is as follows. F-actin-capping proteins bind in a Ca(2+)-independent manner to the fast growing ends of actin filaments (barbed end) thereby blocking the exchange of subunits at these ends. Unlike other capping proteins (such as gelsolin and severin), these proteins do not sever actin filaments. May play a role in the morphogenesis of spermatid. In Mus musculus (Mouse), this protein is F-actin-capping protein subunit alpha-3 (Capza3).